Consider the following 726-residue polypeptide: NHL repeat-containing protein 2 (726 aa).

NHL repeat units lie at residues 212 to 254 (KLYK…VWKN), 265 to 307 (NPGR…IDLE), 335 to 369 (ISSPWDVVFGRSGPEVQRDNILWIAMAGTHQIWAL), 409 to 439 (FAQPSGLSLASEGPWSCLFVADSESSTVRTV), 461 to 505 (AFGD…VDPK), and 518 to 562 (ASNM…LDLE).

In terms of assembly, monomer.

It localises to the cytoplasm. The protein resides in the cytosol. Functionally, required for normal embryonic development. The polypeptide is NHL repeat-containing protein 2 (NHLRC2) (Bos taurus (Bovine)).